The chain runs to 2214 residues: Sortilin-related receptor (2214 aa).

The signal sequence occupies residues 1-28 (MATRSSRRESRLPFLFTLVALLPPGALC). The propeptide at 29-81 (EVWTQRLHGGSAPLPQDRGFLVVQGDPRELRLWARGDARGASRADEKPLRRKR) is removed in mature form. The Cell attachment site signature appears at 63 to 65 (RGD). At 82 to 2137 (SAALQPEPIK…TQAARSTDVA (2056 aa)) the chain is on the lumenal side. A glycan (N-linked (GlcNAc...) asparagine) is linked at Asn-99. Ser-114 carries the phosphoserine modification. The BNR 1 repeat unit spans residues 136–147 (YVSYDYGKSFKK). N-linked (GlcNAc...) asparagine glycosylation is present at Asn-158. One copy of the BNR 2 repeat lies at 232–243 (WKSDDFGQTWIM). 2 N-linked (GlcNAc...) asparagine glycosylation sites follow: Asn-368 and Asn-430. BNR repeat units lie at residues 441–452 (VITFDKGGTWEF), 521–532 (YISSSAGARWRE), and 562–573 (KYSTNEGETWKT). N-linked (GlcNAc...) asparagine glycosylation is found at Asn-616, Asn-674, Asn-818, and Asn-871. LDL-receptor class B repeat units follow at residues 800 to 843 (NCLY…EPLS), 844 to 887 (QLLY…VPQE), 888 to 932 (GVMF…DDQW), 933 to 970 (IYWT…AVFK), and 971 to 1013 (NEIY…FYKG). An EGF-like domain is found at 1026-1072 (CSLLCLPKANNSRSCRCPEDVSSSVLPSGDLMCDCPQGYQLKNNTCV). Asn-1035 and Asn-1068 each carry an N-linked (GlcNAc...) asparagine glycan. 9 consecutive LDL-receptor class A domains span residues 1076 to 1114 (NTCL…NCPT), 1115 to 1155 (TICD…HCEM), 1156 to 1194 (HQCR…NCTA), 1198 to 1236 (TCEA…VNCE), 1238 to 1272 (KCNG…QHCE), 1273 to 1317 (PLCT…GCSQ), 1323 to 1361 (KVCD…NCEN), 1366 to 1405 (PNCS…DCGD), and 1417 to 1455 (STCL…ACPL). 21 cysteine pairs are disulfide-bonded: Cys-1078–Cys-1090, Cys-1085–Cys-1103, Cys-1097–Cys-1112, Cys-1117–Cys-1131, Cys-1125–Cys-1144, Cys-1138–Cys-1153, Cys-1158–Cys-1170, Cys-1165–Cys-1183, Cys-1177–Cys-1192, Cys-1199–Cys-1211, Cys-1206–Cys-1224, Cys-1218–Cys-1235, Cys-1239–Cys-1249, Cys-1244–Cys-1262, Cys-1256–Cys-1271, Cys-1275–Cys-1289, Cys-1283–Cys-1302, Cys-1296–Cys-1315, Cys-1325–Cys-1337, Cys-1332–Cys-1350, and Cys-1344–Cys-1359. The N-linked (GlcNAc...) asparagine glycan is linked to Asn-1164. An N-linked (GlcNAc...) asparagine glycan is attached at Asn-1191. N-linked (GlcNAc...) asparagine glycosylation is present at Asn-1246. Asn-1367 carries an N-linked (GlcNAc...) asparagine glycan. Intrachain disulfides connect Cys-1368–Cys-1381, Cys-1376–Cys-1394, Cys-1388–Cys-1403, Cys-1419–Cys-1431, Cys-1426–Cys-1444, and Cys-1438–Cys-1453. Asn-1458 carries an N-linked (GlcNAc...) asparagine glycan. LDL-receptor class A domains follow at residues 1469 to 1508 (GRCD…NCPT) and 1512 to 1551 (LTCM…ACSD). Disulfide bonds link Cys-1471/Cys-1484, Cys-1478/Cys-1497, Cys-1491/Cys-1506, Cys-1514/Cys-1527, Cys-1521/Cys-1540, and Cys-1534/Cys-1549. 6 consecutive Fibronectin type-III domains span residues 1557-1649 (KVQN…TPEG), 1653-1745 (APRN…TIKG), 1749-1844 (PPPD…VRPP), 1843-1927 (PPAP…VVKM), 1934-2029 (PPRH…APDA), and 2030-2118 (LKII…LYDE). N-linked (GlcNAc...) asparagine glycans are attached at residues Asn-1608, Asn-1706, Asn-1733, Asn-1809, Asn-1854, Asn-1894, Asn-1986, Asn-2010, Asn-2054, Asn-2069, Asn-2076, and Asn-2092. Residues 2138 to 2158 (AVVVPILFLILLSLGVGFAIL) traverse the membrane as a helical segment. Residues 2159–2214 (YTKHRRLQSSFTAFANSHYSSRLGSAIFSSGDDLGEDDEDAPMITGFSDDVPMVIA) are Cytoplasmic-facing. Positions 2161 to 2164 (KHRR) match the Potential nuclear localization signal for the C-terminal fragment generated by PSEN1 motif. Residues 2172–2177 (FANSHY) carry the Endocytosis signal motif. The interval 2190–2214 (DDLGEDDEDAPMITGFSDDVPMVIA) is required for efficient Golgi apparatus - endosome sorting. The required for interaction with GGA1 and GGA2 stretch occupies residues 2201–2214 (MITGFSDDVPMVIA). Phosphoserine; by ROCK2 is present on Ser-2206. A DXXLL motif involved in the interaction with GGA1 motif is present at residues 2208–2212 (DVPMV).

This sequence belongs to the VPS10-related sortilin family. SORL1 subfamily. As to quaternary structure, after maturation cleavage, interacts (via N-terminus) with its own propeptide; this interaction prevents interaction with other ligands, including CRLF1, GDNF, GFRA1, IL6 and IL6R. Interacts (via N-terminal ectodomain) with APP, forming a 1:1 stoichiometric complex, including with isoforms APP695, APP751 and APP770; this interaction retains APP in the trans-Golgi network and reduces processing into soluble APP-alpha and amyloid-beta peptides. Also interacts with APP C-terminal fragment C99 and with Abeta40. Interacts with beta-secretase BACE1/BACE; this interaction may affect BACE1-binding to APP and hence reduce BACE1-dependent APP cleavage. Interacts with LRPAP1/RAP. Interacts (via C-terminal cytosolic domain) with GGA1 and GGA2 (via N-terminal VHS domain). Interacts with PACS1. May interact (via the N-terminal ectodomain) with the morphogenetic neuropeptide, also called head activator or HA; this interaction is impaired in the presence of propeptide. Interacts with neurotensin/NTS. Interacts (via the N-terminal ectodomain) with PDGFB homodimer. Interacts (via N-terminal ectodomain) with the uPA receptor PLAUR; this interaction decreases PLAUR internalization. Interacts (via N-terminal ectodomain) with uPA/PLAU and PAI1/SERPINE1, either individually or in complex with each other, leading to endocytosis; this interaction is abolished in the presence of LRPAP1. Also interacts with the ternary complex composed of PLAUR-PLAU-PAI1. Also interacts with tPA/PLAT either alone or in complex with SERPINE1. Interacts (via C-terminus) with AP-1 and AP-2 complexes. Interacts with BMPR1A and BMPR1B. Interacts with lipoprotein lipase LPL; this interaction is optimal in slightly acidic conditions. Interacts (via N-terminal ectodomain) with GDNF (via propeptide) and GDNF receptor alpha-1/GFRA1, either individually or in complex with each other. The interaction with GDNF occurs mostly intracellularly. Also interacts with other GDNF receptor alpha family members, including GFRA2, GFRA3 and GFRA4. Interacts with the insulin receptor INSR; this interaction strongly increases the surface exposure of INSR. Interacts (via cytosolic C-terminus) with STK39/SPAK. Interacts (via N-terminal ectodomain) with the heterodimeric complex CRLF1-CLC; within this complex, the interaction is mediated predominantly by the CRLF1 moiety. Interacts with CNTFR, as well as with the tripartite signaling complex formed by CRLF1, CLC and CNTFR. Interacts (via N-terminal ectodomain) with IL6; this interaction leads to IL6 internalization and lysosomal degradation. Binding of SOLRL1 secreted N-terminal ectodomain to IL6 may increase IL6 trans signaling. Interacts with secreted IL6R; this interaction leads to IL6R internalization. Also interacts with transmembrane IL6R; this interaction does not affect IL6R subcellular location. Interacts with APOE. Interacts with apolipoprotein E-rich beta-VLDL. Interacts with APOA5; this interaction leads to APOA5 internalization and is abolished by heparin. Interaction with APOA5 results in enhanced binding to chylomicrons. Interacts with ROCK2. Interacts (via cytosolic C-terminus) with PPP3CB/calcineurin A beta. Interacts with NTRK2/TRKB; this interaction facilitates NTRK2 trafficking between synaptic plasma membranes, postsynaptic densities and cell soma, hence positively regulates BDNF signaling. Interacts (via cytosolic C-terminus) with HSPA12A in an ADP-dependent manner; this interaction affects SORL1 internalization and subcellular localization. Interacts (via N-terminal ectodomain) with ERBB2/HER2. Post-translationally, within the Golgi apparatus, the propeptide may be cleaved off by FURIN or a furin-like protease. After cleavage, the propeptide interacts with the mature protein N-terminus, preventing the association with other ligands. At the cell surface, partially subjected to proteolytic shedding that releases the ectodomain in the extracellular milieu. The shedding may be catalyzed by ADAM17/TACE. Following shedding, PSEN1/presenilin-1 cleaves the remaining transmembrane fragment and catalyzes the release of a C-terminal fragment in the cytosol and of a soluble N-terminal beta fragment in the extracellular milieu. The C-terminal cytosolic fragment localizes to the nucleus. In terms of processing, phosphorylation at Ser-2206 facilitates the interaction with GGA1. In terms of tissue distribution, highly expressed in brain (at protein level). Most abundant in the cerebellum, cerebral cortex and occipital pole; low levels in the putamen and thalamus. Expression is significantly reduced in the frontal cortex of patients suffering from Alzheimer disease. Also expressed in spinal cord, spleen, testis, prostate, ovary, thyroid and lymph nodes.

It is found in the golgi apparatus membrane. It localises to the golgi apparatus. The protein resides in the trans-Golgi network membrane. The protein localises to the endosome membrane. Its subcellular location is the early endosome membrane. It is found in the recycling endosome membrane. It localises to the endoplasmic reticulum membrane. The protein resides in the endosome. The protein localises to the multivesicular body membrane. Its subcellular location is the cell membrane. It is found in the cytoplasmic vesicle. It localises to the secretory vesicle membrane. The protein resides in the secreted. Sorting receptor that directs several proteins to their correct location within the cell. Along with AP-1 complex, involved Golgi apparatus - endosome sorting. Sorting receptor for APP, regulating its intracellular trafficking and processing into amyloidogenic-beta peptides. Retains APP in the trans-Golgi network, hence preventing its transit through late endosomes where amyloid beta peptides Abeta40 and Abeta42 are generated. May also sort newly produced amyloid-beta peptides to lysosomes for catabolism. Does not affect APP trafficking from the endoplasmic reticulum to Golgi compartments. Sorting receptor for the BDNF receptor NTRK2/TRKB that facilitates NTRK2 trafficking between synaptic plasma membranes, postsynaptic densities and cell soma, hence positively regulates BDNF signaling by controlling the intracellular location of its receptor. Sorting receptor for GDNF that promotes GDNF regulated, but not constitutive secretion. Sorting receptor for the GDNF-GFRA1 complex, directing it from the cell surface to endosomes. GDNF is then targeted to lysosomes and degraded, while its receptor GFRA1 recycles back to the cell membrane, resulting in a GDNF clearance pathway. The SORL1-GFRA1 complex further targets RET for endocytosis, but not for degradation, affecting GDNF-induced neurotrophic activities. Sorting receptor for ERBB2/HER2. Regulates ERBB2 subcellular distribution by promoting its recycling after internalization from endosomes back to the plasma membrane, hence stimulating phosphoinositide 3-kinase (PI3K)-dependent ERBB2 signaling. In ERBB2-dependent cancer cells, promotes cell proliferation. Sorting receptor for lipoprotein lipase LPL. Promotes LPL localization to endosomes and later to the lysosomes, leading to degradation of newly synthesized LPL. Potential sorting receptor for APOA5, inducing APOA5 internalization to early endosomes, then to late endosomes, wherefrom a portion is sent to lysosomes and degradation, another portion is sorted to the trans-Golgi network. Sorting receptor for the insulin receptor INSR. Promotes recycling of internalized INSR via the Golgi apparatus back to the cell surface, thereby preventing lysosomal INSR catabolism, increasing INSR cell surface expression and strengthening insulin signal reception in adipose tissue. Does not affect INSR internalization. Plays a role in renal ion homeostasis, controlling the phospho-regulation of SLC12A1/NKCC2 by STK39/SPAK kinase and PPP3CB/calcineurin A beta phosphatase, possibly through intracellular sorting of STK39 and PPP3CB. Stimulates, via the N-terminal ectodomain, the proliferation and migration of smooth muscle cells, possibly by increasing cell surface expression of the urokinase receptor uPAR/PLAUR. This may promote extracellular matrix proteolysis and hence facilitate cell migration. By acting on the migration of intimal smooth muscle cells, may accelerate intimal thickening following vascular injury. Promotes adhesion of monocytes. Stimulates proliferation and migration of monocytes/macrophages. Through its action on intimal smooth muscle cells and macrophages, may accelerate intimal thickening and macrophage foam cell formation in the process of atherosclerosis. Regulates hypoxia-enhanced adhesion of hematopoietic stem and progenitor cells to the bone marrow stromal cells via a PLAUR-mediated pathway. This function is mediated by the N-terminal ectodomain. Metabolic regulator, which functions to maintain the adequate balance between lipid storage and oxidation in response to changing environmental conditions, such as temperature and diet. The N-terminal ectodomain negatively regulates adipose tissue energy expenditure, acting through the inhibition the BMP/Smad pathway. May regulate signaling by the heterodimeric neurotrophic cytokine CLCF1-CRLF1 bound to the CNTFR receptor by promoting the endocytosis of the tripartite complex CLCF1-CRLF1-CNTFR and lysosomal degradation. May regulate IL6 signaling, decreasing cis signaling, possibly by interfering with IL6-binding to membrane-bound IL6R, while up-regulating trans signaling via soluble IL6R. The chain is Sortilin-related receptor (SORL1) from Homo sapiens (Human).